The following is a 430-amino-acid chain: Probable aspartic-type endopeptidase ARB_07403 (430 aa).

A signal peptide spans 1–17 (MHVSTLLVAVLLPLALS). Positions 18-87 (KPTPRKKTGS…SKATAGSGKE (70 aa)) are cleaved as a propeptide — activation peptide. Residues 66-105 (YHPQHISKLPGNSKATAGSGKEGVESQDEKGEVVNNPTNH) are disordered. Over residues 87 to 97 (EGVESQDEKGE) the composition is skewed to basic and acidic residues. Residues 109-427 (FLSPVTIGGQ…DQRGPSISLA (319 aa)) form the Peptidase A1 domain. Residue aspartate 125 is part of the active site. The N-linked (GlcNAc...) asparagine glycan is linked to asparagine 306. Residue aspartate 314 is part of the active site.

This sequence belongs to the peptidase A1 family.

Its subcellular location is the secreted. Probable secreted aspartic-type endopeptidase which contributes to virulence. This Arthroderma benhamiae (strain ATCC MYA-4681 / CBS 112371) (Trichophyton mentagrophytes) protein is Probable aspartic-type endopeptidase ARB_07403.